A 662-amino-acid polypeptide reads, in one-letter code: Acetyl-coenzyme A synthetase (662 aa).

CoA-binding positions include R197 to K200 and T317. ATP is bound by residues G393–P395, D417–T422, D510, and R525. S533 contributes to the CoA binding site. An ATP-binding site is contributed by R536. H549 and V552 together coordinate Mg(2+). N6-acetyllysine is present on K623.

Belongs to the ATP-dependent AMP-binding enzyme family. Requires Mg(2+) as cofactor. Post-translationally, acetylated. Deacetylation by the SIR2-homolog deacetylase activates the enzyme.

The enzyme catalyses acetate + ATP + CoA = acetyl-CoA + AMP + diphosphate. In terms of biological role, catalyzes the conversion of acetate into acetyl-CoA (AcCoA), an essential intermediate at the junction of anabolic and catabolic pathways. AcsA undergoes a two-step reaction. In the first half reaction, AcsA combines acetate with ATP to form acetyl-adenylate (AcAMP) intermediate. In the second half reaction, it can then transfer the acetyl group from AcAMP to the sulfhydryl group of CoA, forming the product AcCoA. This Helicobacter pylori (strain G27) protein is Acetyl-coenzyme A synthetase.